A 472-amino-acid chain; its full sequence is Nuclear receptor subfamily 0 group B member 1 (472 aa).

Repeat copies occupy residues 1–67 (MAGE…YRCC), 68–135 (FCGE…YRCC), and 136–202 (FCGK…YRSY). Positions 1–255 (MAGEDHPWHG…RPIALKDPQV (255 aa)) are 4 X 67 AA tandem repeats. 3 short sequence motifs (LXXLL motif) span residues 13–17 (LYNLL), 80–84 (LYSML), and 148–152 (LYSLL). The NR LBD domain maps to 190–471 (QSTQAMAFLY…DMMLEMLCAK (282 aa)). The stretch at 203 to 255 (VCCEEQPQQSSVASDTPVRADQTPAAPQEQPRAPWWDTSSGVQRPIALKDPQV) is one 4; truncated repeat. Disordered regions lie at residues 214 to 237 (VASDTPVRADQTPAAPQEQPRAPW) and 326 to 345 (RRQETEGPEPADPQATEQPQ). The AF-2 motif motif lies at 463 to 468 (MMLEML).

This sequence belongs to the nuclear hormone receptor family. NR0 subfamily. Homodimer. Interacts with NR5A1, NR5A2, NR0B2 and with COPS2. Interacts with ESRRB; represses ESRRB activity at the GATA6 promoter.

The protein localises to the nucleus. The protein resides in the cytoplasm. Nuclear receptor that lacks a DNA-binding domain and acts as a corepressor that inhibits the transcriptional activity of other nuclear receptors through heterodimeric interactions. Component of a cascade required for the development of the hypothalamic-pituitary-adrenal-gonadal axis. May also have a role in the development of the embryo and in the maintenance of embryonic stem cell pluripotency. This is Nuclear receptor subfamily 0 group B member 1 (Nr0b1) from Rattus norvegicus (Rat).